The primary structure comprises 248 residues: Ureidoacrylate amidohydrolase RutB (248 aa).

D41 serves as the catalytic Proton acceptor. K150 is a catalytic residue. The Nucleophile role is filled by C183.

This sequence belongs to the isochorismatase family. RutB subfamily.

The catalysed reaction is (Z)-3-ureidoacrylate + H2O + H(+) = (Z)-3-aminoacrylate + NH4(+) + CO2. It carries out the reaction (Z)-3-ureidoacrylate + H2O = (Z)-3-aminoacrylate + carbamate + H(+). It catalyses the reaction (Z)-2-methylureidoacrylate + H2O + H(+) = (Z)-2-methylaminoacrylate + NH4(+) + CO2. Functionally, hydrolyzes ureidoacrylate to form aminoacrylate and carbamate. The carbamate hydrolyzes spontaneously, thereby releasing one of the nitrogen atoms of the pyrimidine ring as ammonia and one of its carbon atoms as CO2. This chain is Ureidoacrylate amidohydrolase RutB, found in Methylorubrum extorquens (strain CM4 / NCIMB 13688) (Methylobacterium extorquens).